The primary structure comprises 476 residues: Glycogen synthase (476 aa).

Lys-15 provides a ligand contact to ADP-alpha-D-glucose.

The protein belongs to the glycosyltransferase 1 family. Bacterial/plant glycogen synthase subfamily.

It catalyses the reaction [(1-&gt;4)-alpha-D-glucosyl](n) + ADP-alpha-D-glucose = [(1-&gt;4)-alpha-D-glucosyl](n+1) + ADP + H(+). It participates in glycan biosynthesis; glycogen biosynthesis. Synthesizes alpha-1,4-glucan chains using ADP-glucose. This chain is Glycogen synthase, found in Lactobacillus acidophilus (strain ATCC 700396 / NCK56 / N2 / NCFM).